We begin with the raw amino-acid sequence, 147 residues long: Hemoglobin subunit gamma-2 (147 aa).

The 145-residue stretch at 3 to 147 folds into the Globin domain; the sequence is HFTEEDKATI…VASALSSRYH (145 aa). Residue threonine 13 is modified to Phosphothreonine. Phosphoserine is present on residues serine 45, serine 51, and serine 53. At lysine 60 the chain carries N6-acetyllysine. Histidine 64 is a heme b binding site. An N6-acetyllysine modification is found at lysine 83. Histidine 93 serves as a coordination point for heme b. An S-nitrosocysteine modification is found at cysteine 94. Phosphoserine is present on residues serine 140, serine 143, and serine 144.

The protein belongs to the globin family. In terms of assembly, heterotetramer of two alpha chains and two gamma chains in fetal hemoglobin (Hb F). Red blood cells.

Its function is as follows. Gamma chains make up the fetal hemoglobin F, in combination with alpha chains. The chain is Hemoglobin subunit gamma-2 (HBG2) from Hylobates lar (Lar gibbon).